A 248-amino-acid chain; its full sequence is Triosephosphate isomerase (248 aa).

A substrate-binding site is contributed by 9–11 (NWK). H94 acts as the Electrophile in catalysis. The active-site Proton acceptor is the E166. Substrate contacts are provided by residues G172, S212, and 233–234 (GG).

This sequence belongs to the triosephosphate isomerase family. Homodimer.

The protein resides in the cytoplasm. It catalyses the reaction D-glyceraldehyde 3-phosphate = dihydroxyacetone phosphate. It functions in the pathway carbohydrate biosynthesis; gluconeogenesis. It participates in carbohydrate degradation; glycolysis; D-glyceraldehyde 3-phosphate from glycerone phosphate: step 1/1. Its function is as follows. Involved in the gluconeogenesis. Catalyzes stereospecifically the conversion of dihydroxyacetone phosphate (DHAP) to D-glyceraldehyde-3-phosphate (G3P). In Alkaliphilus oremlandii (strain OhILAs) (Clostridium oremlandii (strain OhILAs)), this protein is Triosephosphate isomerase.